A 141-amino-acid chain; its full sequence is uncharacterized protein (141 aa).

Helical transmembrane passes span 7-27 (VAIM…AASL), 47-67 (SAVG…MLGV), 75-95 (AVLC…ILMF), and 106-126 (VIFV…WFVA).

It localises to the cell membrane. This is an uncharacterized protein from Bacillus subtilis (strain 168).